The sequence spans 262 residues: Hydroxyethylthiazole kinase (262 aa).

Met50 provides a ligand contact to substrate. Residues Arg125 and Thr171 each contribute to the ATP site. A substrate-binding site is contributed by Gly198.

The protein belongs to the Thz kinase family. It depends on Mg(2+) as a cofactor.

The catalysed reaction is 5-(2-hydroxyethyl)-4-methylthiazole + ATP = 4-methyl-5-(2-phosphooxyethyl)-thiazole + ADP + H(+). Its pathway is cofactor biosynthesis; thiamine diphosphate biosynthesis; 4-methyl-5-(2-phosphoethyl)-thiazole from 5-(2-hydroxyethyl)-4-methylthiazole: step 1/1. Its function is as follows. Catalyzes the phosphorylation of the hydroxyl group of 4-methyl-5-beta-hydroxyethylthiazole (THZ). The chain is Hydroxyethylthiazole kinase from Shigella flexneri serotype 5b (strain 8401).